The sequence spans 133 residues: Ribosome-binding factor A (133 aa).

It belongs to the RbfA family. Monomer. Binds 30S ribosomal subunits, but not 50S ribosomal subunits or 70S ribosomes.

The protein localises to the cytoplasm. Its function is as follows. One of several proteins that assist in the late maturation steps of the functional core of the 30S ribosomal subunit. Associates with free 30S ribosomal subunits (but not with 30S subunits that are part of 70S ribosomes or polysomes). Required for efficient processing of 16S rRNA. May interact with the 5'-terminal helix region of 16S rRNA. This Pseudomonas fluorescens (strain Pf0-1) protein is Ribosome-binding factor A.